The chain runs to 500 residues: Cytochrome P450 71B26 (500 aa).

Residues 1–21 traverse the membrane as a helical segment; the sequence is MDSIWILSLLFFIIFLLLAAF. A heme-binding site is contributed by C440.

It belongs to the cytochrome P450 family. Heme serves as cofactor.

It localises to the membrane. In Arabidopsis thaliana (Mouse-ear cress), this protein is Cytochrome P450 71B26 (CYP71B26).